The chain runs to 716 residues: DNA ligase (716 aa).

NAD(+) is bound by residues 50–54 (DAEYD), 99–100 (SL), and E132. The N6-AMP-lysine intermediate role is filled by K134. Residues R155, E192, K308, and K332 each contribute to the NAD(+) site. Zn(2+) contacts are provided by C437, C439, C461, and C467. The BRCT domain maps to 638 to 716 (KSNSAVAGKT…EDEWLKLIGE (79 aa)).

This sequence belongs to the NAD-dependent DNA ligase family. LigA subfamily. Requires Mg(2+) as cofactor. It depends on Mn(2+) as a cofactor.

The catalysed reaction is NAD(+) + (deoxyribonucleotide)n-3'-hydroxyl + 5'-phospho-(deoxyribonucleotide)m = (deoxyribonucleotide)n+m + AMP + beta-nicotinamide D-nucleotide.. Functionally, DNA ligase that catalyzes the formation of phosphodiester linkages between 5'-phosphoryl and 3'-hydroxyl groups in double-stranded DNA using NAD as a coenzyme and as the energy source for the reaction. It is essential for DNA replication and repair of damaged DNA. The sequence is that of DNA ligase from Bradyrhizobium diazoefficiens (strain JCM 10833 / BCRC 13528 / IAM 13628 / NBRC 14792 / USDA 110).